A 348-amino-acid polypeptide reads, in one-letter code: MDSDHNHINGDLAHGFENMVCVRCNDGFSMQDQMVNSSGQVWHSECFVCAQCFEPFPDGIYFEYEGRKYCEHDFHVLFSPCCGKCNEFIVGRVIKAMNASWHPGCFCCEICNKQLADVGFLRNAGRALCRECNEREKAAGHGRYVCHKCHAMIDDGQHIKFRGDSFHPYHFKCKRCNNELTTASREVNGELYCLRCHDTMGIPICGACHRPIEERVIAALGKHWHVEHFVCSVCEKPFLGHRHYERKGLPYCEQHFHKLFGNLCFKCGDPCCGEVFQALQKTWCVKCFSCSFCDKKLDQKTKFYEFDMKPTCKRCYDRFPTELKKRISESLKDRDVENQRRSMSPGPK.

LIM zinc-binding domains follow at residues 21–73, 82–132, 146–196, 205–255, and 264–315; these read CVRC…CEHD, CGKC…CREC, CHKC…CLRC, CGAC…CEQH, and CFKC…CKRC.

As to quaternary structure, interacts with unc-98. Component of an integrin containing attachment complex, composed of at least pat-2, pat-3, pat-4, pat-6, unc-52, unc-97 and unc-112. As to expression, restricted to tissue types that attach to the hypodermis, specifically body wall muscles, vulval muscles, and mechanosensory neurons.

The protein resides in the cell junction. It localises to the adherens junction. Its subcellular location is the nucleus. Its function is as follows. Component of an integrin containing attachment complex, which is required for muscle development and maintenance. Probably function in adherens junction. Affects the structural integrity of the integrin containing muscle adherens junctions and contributes to the mechanosensory functions of touch neurons. This chain is LIM domain-containing protein unc-97, found in Caenorhabditis elegans.